The primary structure comprises 305 residues: MLKQRTIKSLVKTVGIGLHSGRKVTLTLRPAAAGTGIVFTRVDLDPAVEIPATASAIGDTRLASVLQKDGARVSTVEHLMSACAGLGIDNLYVDVDAEEIPIMDGSAASFVFLLQSAGIEEQGAAKRFIRVTKPVEIREGDKLARLDPYFGFKLSFTIEFRHPAVDKTGQTFEIDFADTSYTREIARARTFGFAHEVEMLREVGLARGGSLDNAIVLDEHRMLNNDELRYGDEFVRHKILDAIGDLYVVGHPLIAAYTAHKSGHGLNNALLRALLADETAYEIVTFDKIEEAPRAFLPQLQPAFS.

3 residues coordinate Zn(2+): His-78, His-237, and Asp-241. Residue His-264 is the Proton donor of the active site.

It belongs to the LpxC family. Requires Zn(2+) as cofactor.

It catalyses the reaction a UDP-3-O-[(3R)-3-hydroxyacyl]-N-acetyl-alpha-D-glucosamine + H2O = a UDP-3-O-[(3R)-3-hydroxyacyl]-alpha-D-glucosamine + acetate. The protein operates within glycolipid biosynthesis; lipid IV(A) biosynthesis; lipid IV(A) from (3R)-3-hydroxytetradecanoyl-[acyl-carrier-protein] and UDP-N-acetyl-alpha-D-glucosamine: step 2/6. In terms of biological role, catalyzes the hydrolysis of UDP-3-O-myristoyl-N-acetylglucosamine to form UDP-3-O-myristoylglucosamine and acetate, the committed step in lipid A biosynthesis. The protein is UDP-3-O-acyl-N-acetylglucosamine deacetylase of Ralstonia pickettii (strain 12J).